We begin with the raw amino-acid sequence, 324 residues long: MTSTITTTETLQDAVPFVAPPSPPEDTSNKELPEKPYYDVEFNYRLDPRDGGDEVIWGGTVGLMRRKYETRTVRINNERGNEHNFNLDTHGFAWVKHKTSVTEFADYLAIRQGPYFGEVAEMLKRVTGATKVHVIGHLHRSLNYNDTTEEEKNAPDMTMTKGQTPGRFVHVDQSYQGAVRRLYLDLPQEEARRLEKTRWAIINVWRPVRKVTNEPLAVCDARSVREDELFNTLHLVPMRWPDAAPQENQMWAVAPPKTPTQHKWHYVSGMTEDEALLIKMFDSKKDGTARRVPHSSFPTPDDFGEPRASTETRCFVFWEDQEAE.

Positions 1–11 are enriched in polar residues; it reads MTSTITTTETL. 2 disordered regions span residues 1 to 33 and 288 to 308; these read MTST…KELP and TARR…EPRA.

Belongs to the asaB hydroxylase/desaturase family.

The protein operates within mycotoxin biosynthesis. Functionally, hydroxylase/desaturase; part of the gene cluster that mediates the biosynthesis of cercosporin, a light-activated, non-host-selective toxin. The perylenequinone chromophore of cercosporin absorbs light energy to attain an electronically-activated triplet state and produces active oxygen species such as the hydroxyl radical, superoxide, hydrogen peroxide or singlet oxygen upon reaction with oxygen molecules. These reactive oxygen species cause damage to various cellular components including lipids, proteins and nucleic acids. The first step of cercosporin biosynthesis is performed by the polyketide synthase CTB1 which catalyzes the formation of nor-toralactone. The starter unit acyltransferase (SAT) domain of CTB1 initiates polyketide extension by the selective utilization of acetyl-CoA, which is elongated to the heptaketide in the beta-ketoacyl synthase (KS) domain by successive condensations with six malonyl units introduced by the malonyl acyltransferase (MAT) domain. The product template (PT) domain catalyzes C4-C9 and C2-C11 aldol cyclizations and dehydrations to a trihydroxynaphthalene, which is thought to be delivered to the thioesterase (TE) domain for product release. The bifunctional enzyme CTB3 then methylates nor-toralactone to toralactone before conducting an unusual oxidative aromatic ring opening. The O-methyltransferase CTB2 further methylates the nascent OH-6 of the CBT3 product, blocking further oxidation at this site before the reductase CTB6 reduces the 2-oxopropyl ketone at position C7, giving naphthalene. The FAD-dependent monooxygenase CTB5 in concert with the multicopper oxidase CTB12 are responsible for homodimerization of naphthalene with CTB7 installing the dioxepine moiety, finally producing cercosporin. The fasciclin domain-containing protein CTB11 might act with CTB5 and CTB12 whereas the roles of CTB9 and CTB10 have still to be elucidated. This chain is Hydroxylase/desaturase CTB9, found in Cercospora beticola (Sugarbeet leaf spot fungus).